We begin with the raw amino-acid sequence, 28 residues long: Fibrinogen alpha chain (28 aa).

Ser3 is subject to Phosphoserine.

In terms of assembly, heterohexamer; disulfide linked. Contains 2 sets of 3 non-identical chains (alpha, beta and gamma). The 2 heterotrimers are in head to head conformation with the N-termini in a small central domain. In terms of processing, conversion of fibrinogen to fibrin is triggered by thrombin, which cleaves fibrinopeptides A and B from alpha and beta chains, and thus exposes the N-terminal polymerization sites responsible for the formation of the soft clot. The soft clot is converted into the hard clot by factor XIIIA which catalyzes the epsilon-(gamma-glutamyl)lysine cross-linking between gamma chains (stronger) and between alpha chains (weaker) of different monomers. Forms F13A-mediated cross-links between a glutamine and the epsilon-amino group of a lysine residue, forming fibronectin-fibrinogen heteropolymers.

Its subcellular location is the secreted. Cleaved by the protease thrombin to yield monomers which, together with fibrinogen beta (FGB) and fibrinogen gamma (FGG), polymerize to form an insoluble fibrin matrix. Fibrin has a major function in hemostasis as one of the primary components of blood clots. In addition, functions during the early stages of wound repair to stabilize the lesion and guide cell migration during re-epithelialization. Was originally thought to be essential for platelet aggregation, based on in vitro studies using anticoagulated blood. However, subsequent studies have shown that it is not absolutely required for thrombus formation in vivo. Enhances expression of SELP in activated platelets via an ITGB3-dependent pathway. Maternal fibrinogen is essential for successful pregnancy. Fibrin deposition is also associated with infection, where it protects against IFNG-mediated hemorrhage. May also facilitate the immune response via both innate and T-cell mediated pathways. This chain is Fibrinogen alpha chain (FGA), found in Canis lupus familiaris (Dog).